Consider the following 523-residue polypeptide: MEDTSPQAVAEKAAKDPKAAKDLKDDAAAATKSFPDHFSREGDDQMDFEGVIFSSSPVLDLSQRGLRHLGKFFKIPNLQQLHLQRNLLREIPEDFFQLLPNLTWLDLRYNKIKVLPSGIGSHKHLKTLLLERNPIKMLPVELGQVTTLTALNLRHCPLEFPPRLIVQKGLVAILTFLRICSVEKAFPGDELLPEVSAPKMGSNDLQYPVLPLPRKGSPSENSLNDPDQEKEKADFFPPMERLDLSELRKSNAASEIWPSKEEIRRFWKLRQEIVENEQVEIQEKKLLAVELPPNLKAALNVKEKKHRKPWPAVRKRSTSFKGILPNLPSGYQNTVHANRMEDTHKAALQELQEKETVLEQRRRDKRALQEWREQTQHMRTRRELSKLQPPHSNMMASKIPFATDLTDYEKMPVSPFGKVKPSGEGTAQRPIEISASPLAELEDKIKRHTQQIRTRSFLGTNPMQDIKTANQDLETTKKLQEELRKLKVEMTLNKDHPFPSFTGNLSLHPPASQPQNIFFNTKS.

A disordered region spans residues 1–26; it reads MEDTSPQAVAEKAAKDPKAAKDLKDD. The span at 12-26 shows a compositional bias: basic and acidic residues; that stretch reads KAAKDPKAAKDLKDD. 5 LRR repeats span residues 55-76, 77-98, 101-122, 124-145, and 147-168; these read SSPVLDLSQRGLRHLGKFFKIP, NLQQLHLQRNLLREIPEDFFQL, NLTWLDLRYNKIKVLPSGIGSH, HLKTLLLERNPIKMLPVELGQV, and TLTALNLRHCPLEFPPRLIVQK. Disordered stretches follow at residues 206 to 236 and 372 to 394; these read QYPVLPLPRKGSPSENSLNDPDQEKEKADFF and REQTQHMRTRRELSKLQPPHSNM. Composition is skewed to basic and acidic residues over residues 227 to 236 and 372 to 385; these read DQEKEKADFF and REQTQHMRTRRELS. 2 coiled-coil regions span residues 335 to 374 and 463 to 494; these read VHANRMEDTHKAALQELQEKETVLEQRRRDKRALQEWREQ and MQDIKTANQDLETTKKLQEELRKLKVEMTLNK. The interval 503-523 is disordered; that stretch reads GNLSLHPPASQPQNIFFNTKS. Over residues 513–523 the composition is skewed to polar residues; that stretch reads QPQNIFFNTKS.

The chain is Leucine-rich repeat-containing protein 27 (Lrrc27) from Mus musculus (Mouse).